The primary structure comprises 871 residues: MQPAATTCTEDRIQHALERCLHGLSLGRRSAPWSAGLCLNCWSLQELVSRDPGHFLILLEQILQKTQEVQEKGTYDLLAPLALLFYSTVLCTPHFPPDSDLLLKAASTYHCFLTWPVPYCSICREMLTFIDAELKAPGISYQRLVRAEQGLPVRSHRSSTVTVLLLNPVEVQAEFLAVADKLSTPGQSPHGTYTTLLLHAFQATFGAHCDLPKLHRKLQSKTIEELEDIFTETTEAQELASGIGDVAEAREWLRTKLQAVGEKAGFPGILDTASPGKLHTIPIPVARCYTYSWNQDSFDILQEVLLKEQELLQPGILGDDEEEEEEDLEMDRHCAERDSLLSTSSLVSHDSTLLLTSSQASEPVLSRQMLTTFVSGLSDGMDSGYVEDSEENSEWPQKPGSQKRQGHRRPGQKFNRFYKLLKSTSQLVLRRDSRSLESSVDPTLPLRRAGSLCSPLDCPAQLPSRAQRSRSLPQAKLTTQLPRWLLAPPSHHQRRRPFLSGDEDPKASTLRVVVFGSDRISGKVARAYSKLRRLETSHPILTRFFKLQFFYVPVKRSHGTSPSACPSSLSQASPLPADSLKYPSPTDLGMAPWEDSTNDISHYLGMLDPWYERNVLGLMHLPPEVLCQQSLKADSRPLEGSATQLPILADMLLYYCRFAARPVLLQVYQTELTFVTGEKTTEIFIQSLELGHSATTRAIKASGRGRKRLGIDDDREAVPLTLQIIYSKGAISGRSRWSNLEKVCTSVNLSKACQKPEELDSSMEALTLTLTEVVKRQNPKSKKGFNQISTSYIKVDKVQIIGSSSCPFAVCLDQDERKILQSVVRCEVSPCYKPEKSSLPPERSFSQPAETGSDLCSLLCLPIMTFSGALP.

Methionine 1 carries the N-acetylmethionine modification. Residues 25–101 (SLGRRSAPWS…TPHFPPDSDL (77 aa)) form a heterodimerization region. The tract at residues 381–413 (MDSGYVEDSEENSEWPQKPGSQKRQGHRRPGQK) is disordered. Phosphoserine is present on residues serine 451 and serine 500. Positions 646–746 (PILADMLLYY…WSNLEKVCTS (101 aa)) are interaction with beta-gamma G protein dimers.

In terms of assembly, heterodimer of a catalytic subunit (PIK3CG/p120) and a regulatory (PIK3R5a/p101) subunit. Interacts with beta-gamma G protein dimers.

It localises to the nucleus. It is found in the cytoplasm. The protein localises to the cell membrane. With respect to regulation, greatly activated by G gamma proteins. In terms of biological role, regulatory subunit of the PI3K gamma complex. Required for recruitment of the catalytic subunit to the plasma membrane via interaction with beta-gamma G protein dimers. Required for G protein-mediated activation of PIK3CG. The chain is Phosphoinositide 3-kinase regulatory subunit 5 (Pik3r5) from Mus musculus (Mouse).